Reading from the N-terminus, the 556-residue chain is Solute carrier family 22 member 20 (556 aa).

Residues 1–15 lie on the Cytoplasmic side of the membrane; it reads MAFTDLLDALGGVGR. A helical membrane pass occupies residues 16–36; sequence FQLVYTALLLLPCGLLACHTF. Topologically, residues 37–137 are extracellular; the sequence is LQNFTAAAPP…LVCEARTLRD (101 aa). N-linked (GlcNAc...) asparagine glycans are attached at residues Asn-39, Asn-54, Asn-61, and Asn-96. A helical transmembrane segment spans residues 138 to 158; sequence LAQSIYMSGVLVGAALFGGLA. At 159–166 the chain is on the cytoplasmic side; sequence DRLGRKAP. A helical membrane pass occupies residues 167–187; the sequence is LVWSYLQLAVSGAATAYVGSF. At 188 to 194 the chain is on the extracellular side; the sequence is SAYCVFR. A helical membrane pass occupies residues 195-215; that stretch reads FLMGMTFSGIILNSLSLVVEW. The Cytoplasmic segment spans residues 216-225; the sequence is MPTRGRTVAG. The chain crosses the membrane as a helical span at residues 226-246; that stretch reads ILLGFSFTLGQLILAGVAYLI. Residues 247 to 250 are Extracellular-facing; sequence RPWR. A helical membrane pass occupies residues 251–271; the sequence is WLQFAVSAPFLVFFLYSWWLP. Topologically, residues 272-339 are cytoplasmic; that stretch reads ESSRWLLLHG…DLFRTPAIRR (68 aa). A helical transmembrane segment spans residues 340–360; that stretch reads VTCCLMGVWFSNSVAYYGLAM. Residues 361 to 366 lie on the Extracellular side of the membrane; the sequence is DLQKFG. Residues 367-387 form a helical membrane-spanning segment; it reads LSIYLVQALFGIIDIPAMLVA. Residues 388–397 lie on the Cytoplasmic side of the membrane; it reads TTTMIYVGRR. The helical transmembrane segment at 398–418 threads the bilayer; sequence ATVSSFLILAGLMVIANMFMP. Residues 419 to 425 are Extracellular-facing; sequence EDLQTLR. A helical transmembrane segment spans residues 426–446; sequence TVQAALGKGCLASSFICVYLF. The Cytoplasmic segment spans residues 447 to 457; that stretch reads TGELYPTEIRQ. A helical membrane pass occupies residues 458–478; that stretch reads MGMGFASVNARLGGLVAPLIT. The Extracellular segment spans residues 479-485; it reads TLGEISP. Residues 486–506 form a helical membrane-spanning segment; that stretch reads VLPPVSFGATSVLAGMAVACF. Residues 507 to 556 are Cytoplasmic-facing; sequence LTETRNVPLVETIAAMERRVKQGRSKRDTEQKSEEISLQQLGASPLKETI. Residues 526–541 show a composition bias toward basic and acidic residues; it reads VKQGRSKRDTEQKSEE. A disordered region spans residues 526–556; sequence VKQGRSKRDTEQKSEEISLQQLGASPLKETI.

The protein belongs to the major facilitator (TC 2.A.1) superfamily. Organic cation transporter (TC 2.A.1.19) family. Highly expressed in olfactory mucosa. Weakly expressed in testis. Not detected in heart, spleen, lung, kidney or brain.

It is found in the membrane. Functionally, organic anion transporter that mediates the uptake of estrone sulfate. Inhibited by probenecid, propionate, 2-methylbutyrate, 3-methylbutyrate, benzoate, heptanoate and 2-ethylhaxanoate. May act as an odorant transporter. This chain is Solute carrier family 22 member 20 (Slc22a20), found in Mus musculus (Mouse).